A 690-amino-acid polypeptide reads, in one-letter code: MFCTKLKDLKITGECPLSLLAPGQVPKEPGEEVAGTSESGKATLPICQDVPEKNVQRSLPQRKTSRSRVYLHTLAESICKLIFPELERLNLALQRTLAKHKIKESRKSLEREDLEKIITDQAIAAGVPVEIVKESLGEELFKICYEEDEHILGVVGGTLKDFLNSFSTLLKQSSHCQEAEKRGRFEDASILCLDKDHDFLNVYYFFPKRITSLILPGIIKAAAHILYETEVEVSLLPPCFRNDCSEFVNQPYLLYSLHVKSTKPSLSPGKPQSSLVIPASLFCKTFPFHFMFDKDMTILQFGNGIRRLMNRRDFQGKPHFEEYFEVLTPKINQTFSGIMTMLNMQFVVRVRRWDNSVKKSSRVMDLKGQMIYIVESSAILFLGSPCVDRLEDFTGRGLYLSDIPIHNALRDVVLIGEQARAQDGLKKRLGKLKATLEQAHQALEEEKKKTVDLLCSIFPSEVAQQLWQGQVVQAKKFSNVTMLFSDIVGFTAICSQCSPLQVITMLNALYTRFDQQCGELDVYKVETIGDAYCVAGGLHKESDTHAAQIALMALKMMELSDEVMSPHGEPIKMRIGLHSGSVFAGVVGVKMPRYCLFGNNVTLANKFESCSIPRKINVSPTTYRLLKDCPGFVFTPRSREELPPNFPSEIPGICHFLEAYEPATNSKPWFQKKDVEDGNANFLGKASGID.

S267 is subject to Phosphoserine. A Guanylate cyclase domain is found at 481-608; the sequence is TMLFSDIVGF…NNVTLANKFE (128 aa).

It belongs to the adenylyl cyclase class-4/guanylyl cyclase family. As to quaternary structure, the active enzyme is formed by a heterodimer of an alpha and a beta subunit. Heterodimer with GUCY1B1. Mg(2+) serves as cofactor. Requires Mn(2+) as cofactor.

Its subcellular location is the cytoplasm. It carries out the reaction GTP = 3',5'-cyclic GMP + diphosphate. With respect to regulation, activated by nitric oxide in the presence of magnesium or manganese ions. This is Guanylate cyclase soluble subunit alpha-1 (GUCY1A1) from Canis lupus familiaris (Dog).